The sequence spans 205 residues: Probable thymidylate kinase (205 aa).

10-17 is a binding site for ATP; the sequence is GIDGSGKS.

This sequence belongs to the thymidylate kinase family.

It carries out the reaction dTMP + ATP = dTDP + ADP. In Methanosarcina barkeri (strain Fusaro / DSM 804), this protein is Probable thymidylate kinase.